We begin with the raw amino-acid sequence, 569 residues long: RNA demethylase ALKBH10B (569 aa).

A coiled-coil region spans residues 118–151 (QKVAAKKAEDLKQKKTEEEAEEDLKEVVATEEEE). Positions 164 to 190 (ENDVNGDVEDVEDDSPTSDITDSGSHQ) are disordered. Positions 167 to 179 (VNGDVEDVEDDSP) are enriched in acidic residues. The segment covering 180–189 (TSDITDSGSH) has biased composition (polar residues). Residues His366, Glu368, and His421 each contribute to the Fe cation site. Arg430 serves as a coordination point for 2-oxoglutarate. Over residues 531-545 (KHVKHLPPRAQKKRL) the composition is skewed to basic residues. Positions 531–569 (KHVKHLPPRAQKKRLLPLPPAASSSPAGGSTSEPVITVG) are disordered. Low complexity predominate over residues 551-560 (AASSSPAGGS).

The protein belongs to the alkB family. Fe(2+) serves as cofactor.

It catalyses the reaction an N(6)-methyladenosine in mRNA + 2-oxoglutarate + O2 = an adenosine in mRNA + formaldehyde + succinate + CO2. In terms of biological role, dioxygenase that demethylates RNA by oxidative demethylation: specifically demethylates N(6)-methyladenosine (m6A) RNA, the most prevalent internal modification of messenger RNA (mRNA) in higher eukaryotes. ALKBH10B-mediated mRNA m6A demethylation stabilizes the mRNA of the key flowering time regulators FT, SPL3 and SPL9, which are involved in the control of floral transition. The polypeptide is RNA demethylase ALKBH10B (Arabidopsis thaliana (Mouse-ear cress)).